The chain runs to 399 residues: Acetate kinase (399 aa).

Asn-7 is a Mg(2+) binding site. Lys-14 serves as a coordination point for ATP. Residue Arg-91 participates in substrate binding. Asp-148 serves as the catalytic Proton donor/acceptor. ATP contacts are provided by residues 208–212 (HLGNG), 283–285 (DFR), and 331–335 (GLGEN). Glu-384 provides a ligand contact to Mg(2+).

Belongs to the acetokinase family. In terms of assembly, homodimer. Mg(2+) serves as cofactor. Mn(2+) is required as a cofactor.

The protein localises to the cytoplasm. It catalyses the reaction acetate + ATP = acetyl phosphate + ADP. It functions in the pathway metabolic intermediate biosynthesis; acetyl-CoA biosynthesis; acetyl-CoA from acetate: step 1/2. Catalyzes the formation of acetyl phosphate from acetate and ATP. Can also catalyze the reverse reaction. The polypeptide is Acetate kinase (Desulfitobacterium hafniense (strain DSM 10664 / DCB-2)).